A 732-amino-acid polypeptide reads, in one-letter code: Conidiogenone synthase (732 aa).

Positions 1–311 (MADKITDEYA…SLCVPRYCKV (311 aa)) are terpene cyclase. A Mg(2+)-binding site is contributed by Asp97. Residues Asp97, 169–172 (RIVD), Asn213, 217–221 (SWDKE), and 307–308 (RY) contribute to the substrate site. The short motif at 97 to 101 (DALNQ) is the DDXXD 1 element. Positions 213-221 (NDLFSWDKE) match the NSE/DTE motif. Positions 312–732 (DRNPYKDHLE…LRAMEETLQK (421 aa)) are prenyltransferase. The interval 348–370 (KQSELKDPSSSTYKSHFSPLEPN) is disordered. Isopentenyl diphosphate is bound by residues Lys402, Arg405, and His434. Mg(2+) is bound by residues Asp441 and Asp445. The DDXXD 2 signature appears at 441–445 (DDIQD). Position 450 (Arg450) interacts with dimethylallyl diphosphate. Arg451 contacts isopentenyl diphosphate. Dimethylallyl diphosphate is bound by residues Lys529, Thr530, Gln565, Asn572, Lys582, and Lys592.

It in the N-terminal section; belongs to the terpene synthase family. In the C-terminal section; belongs to the FPP/GGPP synthase family. In terms of assembly, hexamer. Mg(2+) serves as cofactor.

It catalyses the reaction isopentenyl diphosphate + (2E,6E)-farnesyl diphosphate = (2E,6E,10E)-geranylgeranyl diphosphate + diphosphate. It functions in the pathway secondary metabolite biosynthesis; terpenoid biosynthesis. Its function is as follows. Bifunctional terpene synthase; part of the gene cluster that mediates the biosynthesis of conidiogenone, a diterpene known to induce the conidiation. The bifunctional terpene synthase PchDS converts isopentenyl diphosphate (IPP) and dimethylallyl diphosphate (DMAPP) into deoxyconidiogenol. The C-terminal prenyltransferase (PT) domain of PchDS catalyzes formation of GGPP, whereas the N-terminal terpene cyclase (TC) domain catalyzes the cyclization of GGPP into deoxyconidiogenol. The cytochrome P450 monooxygenase PchP450 then catalyzes two rounds of oxidation to furnish conidiogenone. The chain is Conidiogenone synthase from Penicillium rubens (strain ATCC 28089 / DSM 1075 / NRRL 1951 / Wisconsin 54-1255) (Penicillium chrysogenum).